Reading from the N-terminus, the 307-residue chain is UDP-3-O-acyl-N-acetylglucosamine deacetylase (307 aa).

Residues H80, H239, and D243 each coordinate Zn(2+). H266 serves as the catalytic Proton donor.

It belongs to the LpxC family. Zn(2+) is required as a cofactor.

It catalyses the reaction a UDP-3-O-[(3R)-3-hydroxyacyl]-N-acetyl-alpha-D-glucosamine + H2O = a UDP-3-O-[(3R)-3-hydroxyacyl]-alpha-D-glucosamine + acetate. It participates in glycolipid biosynthesis; lipid IV(A) biosynthesis; lipid IV(A) from (3R)-3-hydroxytetradecanoyl-[acyl-carrier-protein] and UDP-N-acetyl-alpha-D-glucosamine: step 2/6. In terms of biological role, catalyzes the hydrolysis of UDP-3-O-myristoyl-N-acetylglucosamine to form UDP-3-O-myristoylglucosamine and acetate, the committed step in lipid A biosynthesis. In Neisseria gonorrhoeae (strain ATCC 700825 / FA 1090), this protein is UDP-3-O-acyl-N-acetylglucosamine deacetylase.